The sequence spans 60 residues: DNA-binding protein 7c (60 aa).

Positions 37–60 (DNGKTGRGAVSEKDAPKELLEKLK) are disordered. Residues 46-60 (VSEKDAPKELLEKLK) show a composition bias toward basic and acidic residues.

Belongs to the 7 kDa DNA-binding/endoribonuclease P2 family. In terms of assembly, monomer.

It localises to the cytoplasm. Functionally, can constrain negative DNA supercoils. May be involved in maintaining the integrity of the genome at high temperature. In Acidianus hospitalis (strain W1), this protein is DNA-binding protein 7c.